Reading from the N-terminus, the 340-residue chain is Sulfotransferase 2B1 (340 aa).

Residue K67 to W72 participates in 3'-phosphoadenylyl sulfate binding. The substrate site is built by W95 and W100. Residue H122 is the Proton acceptor of the active site. 3'-phosphoadenylyl sulfate contacts are provided by residues R144, S152, Y207, S241–M246, and R271–G273. Residues L301 to Q340 are disordered.

Belongs to the sulfotransferase 1 family. Isoform 1 is expressed in skin and testis. Higher level of isoform 2 expressed in skin and intestine, moderate level in the kidney, low level in liver, stomach and placenta.

It is found in the cytoplasm. The protein localises to the cytosol. The protein resides in the microsome. It localises to the nucleus. The catalysed reaction is an alcohol + 3'-phosphoadenylyl sulfate = an alkyl sulfate + adenosine 3',5'-bisphosphate + H(+). The enzyme catalyses pregnenolone + 3'-phosphoadenylyl sulfate = pregnenolone sulfate + adenosine 3',5'-bisphosphate + H(+). It catalyses the reaction 3beta-hydroxyandrost-5-en-17-one + 3'-phosphoadenylyl sulfate = dehydroepiandrosterone 3-sulfate + adenosine 3',5'-bisphosphate + H(+). It carries out the reaction cholesterol + 3'-phosphoadenylyl sulfate = cholesterol sulfate + adenosine 3',5'-bisphosphate + H(+). In terms of biological role, sulfotransferase that utilizes 3'-phospho-5'-adenylyl sulfate (PAPS) as sulfonate donor to catalyze the sulfate conjugation. Sulfonation increases the water solubility of most compounds, and therefore their renal excretion, but it can also result in bioactivation to form active metabolites. Sulfonates cholesterol. Catalyzes sulfation of the 3beta-hydroxyl groups of steroids, such as, pregnenolone and dehydroepiandrosterone (DHEA). Conjugates efficiently cholesterol but has a greater affinity for pregnenolone sulfation. Does not show high activity with DHEA. Plays a role in epidermal cholesterol metabolism and in the regulation of epidermal proliferation and differentiation. Prefers pregnenolone over DHEA as a substrate and does not sulfate cholesterol. This is Sulfotransferase 2B1 from Rattus norvegicus (Rat).